The chain runs to 675 residues: Putative L-type lectin-domain containing receptor kinase I.11 (675 aa).

A signal peptide spans 1 to 22 (MASERLHLILLVFFNHLTFLLS). Over 23–292 (QQEEAGFIYN…PKAKQEQTSP (270 aa)) the chain is Extracellular. The interval 27–263 (AGFIYNGFGQ…YQYILGWSFS (237 aa)) is legume-lectin like. N-linked (GlcNAc...) asparagine glycosylation is found at Asn-60, Asn-129, Asn-186, Asn-209, and Asn-230. Residues 293–313 (LLIVLLMLLVLIMLAVLGGIY) form a helical membrane-spanning segment. Residues 314–675 (LYRRKKYAEV…THTITYGDGR (362 aa)) lie on the Cytoplasmic side of the membrane. Residues 348 to 620 (FDKDGRLGKG…QVIQYINQNL (273 aa)) enclose the Protein kinase domain. ATP is bound by residues 354–362 (LGKGGFGEV) and Lys-376. Asp-472 (proton acceptor) is an active-site residue.

In the C-terminal section; belongs to the protein kinase superfamily. Ser/Thr protein kinase family. This sequence in the N-terminal section; belongs to the leguminous lectin family.

The protein localises to the cell membrane. It catalyses the reaction L-seryl-[protein] + ATP = O-phospho-L-seryl-[protein] + ADP + H(+). The catalysed reaction is L-threonyl-[protein] + ATP = O-phospho-L-threonyl-[protein] + ADP + H(+). This Arabidopsis thaliana (Mouse-ear cress) protein is Putative L-type lectin-domain containing receptor kinase I.11 (LECRK111).